The primary structure comprises 655 residues: uncharacterized protein (655 aa).

Residues 245 to 469 (PGVIAQALFT…NLKVIVNLGY (225 aa)) enclose the PE-PPE domain.

Belongs to the mycobacterial PPE family.

This is an uncharacterized protein from Mycobacterium tuberculosis (strain ATCC 25618 / H37Rv).